The sequence spans 78 residues: Acyl carrier protein (78 aa).

The Carrier domain occupies 2–77; it reads STIEERVKKI…AAIDYIEAAN (76 aa). Residue serine 37 is modified to O-(pantetheine 4'-phosphoryl)serine.

It belongs to the acyl carrier protein (ACP) family. 4'-phosphopantetheine is transferred from CoA to a specific serine of apo-ACP by AcpS. This modification is essential for activity because fatty acids are bound in thioester linkage to the sulfhydryl of the prosthetic group.

It localises to the cytoplasm. It functions in the pathway lipid metabolism; fatty acid biosynthesis. Its function is as follows. Carrier of the growing fatty acid chain in fatty acid biosynthesis. This chain is Acyl carrier protein, found in Edwardsiella ictaluri (strain 93-146).